The chain runs to 727 residues: LIM domain-binding protein 3 (727 aa).

Residues 1-84 form the PDZ domain; it reads MSYSVTLTGP…NLSLTLQKSK (84 aa). A phosphoserine mark is found at Ser44, Ser121, and Ser123. The disordered stretch occupies residues 86–197; that stretch reads PIPISTTAPP…GSSQPRQYNN (112 aa). A compositionally biased stretch (low complexity) spans 140–156; sequence PTFSPAFSRPSAFSSLA. The segment covering 188-197 has biased composition (polar residues); sequence GSSQPRQYNN. Residue Ser217 is modified to Phosphoserine. Position 219 is an omega-N-methylarginine (Arg219). Residue Ser223 is modified to Phosphoserine. 2 disordered regions span residues 284-440 and 472-529; these read TEFM…YTPS and APSV…PQVP. Residues 312-385 show a composition bias toward low complexity; that stretch reads ATTPLLPASA…SAPATHTSYS (74 aa). Residues 428–440 are compositionally biased toward pro residues; the sequence is PYTPSPAPAYTPS. Polar residues predominate over residues 494–513; sequence DSFSQKFAPGKSTTSISKQT. An omega-N-methylarginine mark is found at Arg516 and Arg533. 3 consecutive LIM zinc-binding domains span residues 549-607, 608-667, and 668-727; these read PLCG…QFFA, PLCA…LFST, and KCHG…TINL.

In terms of assembly, interacts via its LIM domains with various PKC isoforms. Interacts via its PDZ domain with the ACTN2 C-terminal region. Interacts with MYOZ1, MYOZ2 and MYOZ3. As to expression, expressed primarily in skeletal muscle and to a lesser extent in heart. Also detected in brain and placenta.

The protein localises to the cytoplasm. It localises to the perinuclear region. It is found in the cell projection. Its subcellular location is the pseudopodium. The protein resides in the cytoskeleton. The protein localises to the myofibril. It localises to the sarcomere. It is found in the z line. May function as an adapter in striated muscle to couple protein kinase C-mediated signaling via its LIM domains to the cytoskeleton. This Homo sapiens (Human) protein is LIM domain-binding protein 3.